The following is a 383-amino-acid chain: Queuine tRNA-ribosyltransferase (383 aa).

The Proton acceptor role is filled by aspartate 92. Substrate contacts are provided by residues 92-96 (DSGGF), aspartate 146, glutamine 190, and glycine 217. The tract at residues 248-254 (GVGKPED) is RNA binding. Aspartate 267 serves as the catalytic Nucleophile. The RNA binding; important for wobble base 34 recognition stretch occupies residues 272 to 276 (TRNAR). Zn(2+) is bound by residues cysteine 310, cysteine 312, cysteine 315, and histidine 341.

It belongs to the queuine tRNA-ribosyltransferase family. As to quaternary structure, homodimer. Within each dimer, one monomer is responsible for RNA recognition and catalysis, while the other monomer binds to the replacement base PreQ1. Zn(2+) serves as cofactor.

The enzyme catalyses 7-aminomethyl-7-carbaguanine + guanosine(34) in tRNA = 7-aminomethyl-7-carbaguanosine(34) in tRNA + guanine. It functions in the pathway tRNA modification; tRNA-queuosine biosynthesis. Functionally, catalyzes the base-exchange of a guanine (G) residue with the queuine precursor 7-aminomethyl-7-deazaguanine (PreQ1) at position 34 (anticodon wobble position) in tRNAs with GU(N) anticodons (tRNA-Asp, -Asn, -His and -Tyr). Catalysis occurs through a double-displacement mechanism. The nucleophile active site attacks the C1' of nucleotide 34 to detach the guanine base from the RNA, forming a covalent enzyme-RNA intermediate. The proton acceptor active site deprotonates the incoming PreQ1, allowing a nucleophilic attack on the C1' of the ribose to form the product. After dissociation, two additional enzymatic reactions on the tRNA convert PreQ1 to queuine (Q), resulting in the hypermodified nucleoside queuosine (7-(((4,5-cis-dihydroxy-2-cyclopenten-1-yl)amino)methyl)-7-deazaguanosine). The sequence is that of Queuine tRNA-ribosyltransferase from Psychrobacter sp. (strain PRwf-1).